A 110-amino-acid polypeptide reads, in one-letter code: Phosphoribosyl-ATP pyrophosphatase (110 aa).

This sequence belongs to the PRA-PH family.

It localises to the cytoplasm. The enzyme catalyses 1-(5-phospho-beta-D-ribosyl)-ATP + H2O = 1-(5-phospho-beta-D-ribosyl)-5'-AMP + diphosphate + H(+). It participates in amino-acid biosynthesis; L-histidine biosynthesis; L-histidine from 5-phospho-alpha-D-ribose 1-diphosphate: step 2/9. The sequence is that of Phosphoribosyl-ATP pyrophosphatase from Clostridium botulinum (strain Kyoto / Type A2).